The sequence spans 130 residues: Protein NrdI (130 aa).

This sequence belongs to the NrdI family.

Probably involved in ribonucleotide reductase function. This Staphylococcus carnosus (strain TM300) protein is Protein NrdI.